Here is a 203-residue protein sequence, read N- to C-terminus: MQFELNAQARTLQGTGASRRLRHAAKVPGIVYGGAAAPQSIEVDHNDLLLKLKKEAFHSSIINLIIDGKKEQVLLRDTQVHAYKPLVLHVDFQRVDATHELHVKVPLHFVNEEVAPGVKLNGGLVNHVMTEVDIQCLAGDLPEFIEVDLSSLKIGGSIHLSQLKLPKGVKIVHHTADDSVVVGIVGKGGASEEAAEGEAAAAE.

This sequence belongs to the bacterial ribosomal protein bL25 family. CTC subfamily. In terms of assembly, part of the 50S ribosomal subunit; part of the 5S rRNA/L5/L18/L25 subcomplex. Contacts the 5S rRNA. Binds to the 5S rRNA independently of L5 and L18.

This is one of the proteins that binds to the 5S RNA in the ribosome where it forms part of the central protuberance. This Dechloromonas aromatica (strain RCB) protein is Large ribosomal subunit protein bL25.